The sequence spans 584 residues: 4-hydroxybenzoate decarboxylase subunit C (584 aa).

Belongs to the UbiD family. In terms of assembly, component of the decarboxylase complex composed of the subunits B and C (Potential). The subunit D usually found in other organisms seems to be absent.

The catalysed reaction is 4-hydroxybenzoate + H(+) = phenol + CO2. The enzyme activity is enhanced by Mg(2+), Fe(2+), Mn(2+) and Ca(2+). No stimulation is observed with Cu(2+) and Zn(2+). Functionally, catalyzes the reversible decarboxylation of 4-hydroxybenzoate. This is 4-hydroxybenzoate decarboxylase subunit C from Chlamydia pneumoniae (Chlamydophila pneumoniae).